The primary structure comprises 182 residues: Transcription termination/antitermination protein NusG (182 aa).

The KOW domain maps to 130-161 (VGEVVRVNEGPFADFNGTVEEVDYEKSRLKVS).

It belongs to the NusG family.

In terms of biological role, participates in transcription elongation, termination and antitermination. The protein is Transcription termination/antitermination protein NusG of Vibrio vulnificus (strain CMCP6).